Here is a 319-residue protein sequence, read N- to C-terminus: 7-methylguanosine phosphate-specific 5'-nucleotidase (319 aa).

Residue Asp-55 is the Nucleophile of the active site. Residues Asp-55 and Asp-57 each coordinate Mg(2+). Catalysis depends on Asp-57, which acts as the Proton donor. Glu-103 serves as a coordination point for CMP. Glu-103 and Ser-124 together coordinate N(7)-methyl-GMP. Residue 171–172 (SA) coordinates substrate. Asp-245 provides a ligand contact to Mg(2+).

It belongs to the pyrimidine 5'-nucleotidase family. As to quaternary structure, monomer. Mg(2+) serves as cofactor.

The catalysed reaction is N(7)-methyl-GMP + H2O = N(7)-methylguanosine + phosphate. It carries out the reaction CMP + H2O = cytidine + phosphate. It catalyses the reaction a ribonucleoside 5'-phosphate + H2O = a ribonucleoside + phosphate. Inhibited by high levels of AMP. Its function is as follows. Specifically hydrolyzes 7-methylguanosine monophosphate (m(7)GMP) to 7-methylguanosine and inorganic phosphate. Also able to mediate hydrolysis of diphosphate (m(7)GDP) to 7-methylguanosine and 2 inorganic phosphate with lower activity. The specific activity for m(7)GMP may protect cells against undesired salvage of m(7)GMP and its incorporation into nucleic acids. Also has weak activity for CMP. UMP and purine nucleotides are poor substrates. The polypeptide is 7-methylguanosine phosphate-specific 5'-nucleotidase (Drosophila melanogaster (Fruit fly)).